The following is a 301-amino-acid chain: MSATVEFARMNGLGNKILVVDMRGRPDKVTPAAAVALNADPQTEFDQIMAIHDPKADGTDAFIDILNSDGSKAQACGNGTRCVVQALAAETGRKAFTFQTVAGILNAVEHEDGTISVDMGRPVFDWNRIPLAEEFHDTSRIELQIGPIDNPVLHSPSAMSMGNPHAIFWVDRDVMSYDLARFGPLLENHPMFPERANITLAQVTSPTSMTTRTWERGAGLTLACGSAACSAAVSAARTGRTGRKVTINVASAKPPATLSIEWRERDDHVIMTGPAEWEWSGSLDPSTGLWSRDGTQEAGAR.

Positions 15, 47, and 67 each coordinate substrate. The active-site Proton donor is the Cys76. Substrate contacts are provided by residues 77-78, Asn163, Asn197, and 215-216; these read GN and ER. Cys224 functions as the Proton acceptor in the catalytic mechanism. 225–226 lines the substrate pocket; it reads GS. The interval 280 to 301 is disordered; that stretch reads SGSLDPSTGLWSRDGTQEAGAR.

The protein belongs to the diaminopimelate epimerase family. As to quaternary structure, homodimer.

It is found in the cytoplasm. The catalysed reaction is (2S,6S)-2,6-diaminopimelate = meso-2,6-diaminopimelate. Its pathway is amino-acid biosynthesis; L-lysine biosynthesis via DAP pathway; DL-2,6-diaminopimelate from LL-2,6-diaminopimelate: step 1/1. Functionally, catalyzes the stereoinversion of LL-2,6-diaminopimelate (L,L-DAP) to meso-diaminopimelate (meso-DAP), a precursor of L-lysine and an essential component of the bacterial peptidoglycan. The protein is Diaminopimelate epimerase of Rhizobium leguminosarum bv. trifolii (strain WSM2304).